The sequence spans 230 residues: Orotidine 5'-phosphate decarboxylase (230 aa).

Substrate-binding positions include aspartate 10, lysine 31, 58–67, threonine 117, arginine 179, glutamine 188, glycine 208, and arginine 209; that span reads DLKLHDIPNT. Lysine 60 acts as the Proton donor in catalysis.

This sequence belongs to the OMP decarboxylase family. Type 1 subfamily. As to quaternary structure, homodimer.

It carries out the reaction orotidine 5'-phosphate + H(+) = UMP + CO2. The protein operates within pyrimidine metabolism; UMP biosynthesis via de novo pathway; UMP from orotate: step 2/2. Functionally, catalyzes the decarboxylation of orotidine 5'-monophosphate (OMP) to uridine 5'-monophosphate (UMP). The protein is Orotidine 5'-phosphate decarboxylase of Staphylococcus aureus (strain USA300).